Consider the following 384-residue polypeptide: Probable protein phosphatase 2C 42 (384 aa).

The 301-residue stretch at 58 to 358 (DFSMAVIQAN…DDITVIVVFL (301 aa)) folds into the PPM-type phosphatase domain. The Mn(2+) site is built by D89, G90, D290, and D349.

It belongs to the PP2C family. Mg(2+) is required as a cofactor. Mn(2+) serves as cofactor.

The enzyme catalyses O-phospho-L-seryl-[protein] + H2O = L-seryl-[protein] + phosphate. It catalyses the reaction O-phospho-L-threonyl-[protein] + H2O = L-threonyl-[protein] + phosphate. In terms of biological role, dephosphorylates and represses plasma membrane H(+)-ATPases (PM H(+)-ATPases, e.g. AHA1 and AHA2), thus influencing negatively plant growth and fitness. Promotes the apical hook maintenance of etiolated seedlings. The protein is Probable protein phosphatase 2C 42 of Arabidopsis thaliana (Mouse-ear cress).